A 90-amino-acid polypeptide reads, in one-letter code: Bombyxin B-7 (90 aa).

The N-terminal stretch at 1 to 20 is a signal peptide; that stretch reads MMKTSVMLMLVVVISLMCSG. Disulfide bonds link C30-C76, C42-C89, and C75-C80. Residues 49-67 constitute a propeptide, c peptide like; that stretch reads GGAQYAPYFWTRQYLGSRG.

The protein belongs to the insulin family. In terms of assembly, heterodimer of a B chain and an A chain linked by two disulfide bonds.

Its subcellular location is the secreted. Functionally, brain peptide responsible for activation of prothoracic glands to produce ecdysone in insects. This chain is Bombyxin B-7 (BBXB7), found in Bombyx mori (Silk moth).